A 511-amino-acid polypeptide reads, in one-letter code: Inositol-3-phosphate synthase (511 aa).

24 residues coordinate NAD(+): G70, N71, N72, D143, S179, I180, Q190, R193, S230, A231, N232, T233, G281, S282, D306, T309, N340, N341, D342, K355, G393, D394, D422, and S423.

Belongs to the myo-inositol 1-phosphate synthase family. Requires NAD(+) as cofactor.

The protein resides in the cytoplasm. It catalyses the reaction D-glucose 6-phosphate = 1D-myo-inositol 3-phosphate. The protein operates within polyol metabolism; myo-inositol biosynthesis; myo-inositol from D-glucose 6-phosphate: step 1/2. Its function is as follows. Key enzyme in myo-inositol biosynthesis pathway that catalyzes the conversion of glucose 6-phosphate to 1-myo-inositol 1-phosphate in a NAD-dependent manner. Rate-limiting enzyme in the synthesis of all inositol-containing compounds. The chain is Inositol-3-phosphate synthase (ino1) from Dictyostelium discoideum (Social amoeba).